The sequence spans 608 residues: uncharacterized protein (608 aa).

The interval 1-21 (MHTNSPLRADNQDLETQPLLR) is disordered. A Phosphothreonine modification is found at Thr-24. At Ser-27 the chain carries Phosphoserine. The helical transmembrane segment at 55 to 75 (IIYLLGIVLLSFFGVSIVQYI) threads the bilayer. N-linked (GlcNAc...) asparagine glycosylation is found at Asn-115, Asn-141, Asn-169, Asn-407, Asn-425, Asn-449, Asn-453, Asn-527, and Asn-580.

It localises to the membrane. This is an uncharacterized protein from Saccharomyces cerevisiae (strain ATCC 204508 / S288c) (Baker's yeast).